The chain runs to 381 residues: cAMP-dependent protein kinase type I-beta regulatory subunit (381 aa).

Positions 2 to 136 (ASPPACPSEE…ALAKAISKNV (135 aa)) are dimerization and phosphorylation. Position 3 is a phosphoserine (serine 3). Tyrosine 21 is subject to 3'-nitrotyrosine. Positions 67 to 98 (ARQKSNSQSDSHDEEVSPTPPNPVVKARRRRG) are disordered. Residues serine 77 and serine 83 each carry the phosphoserine modification. Threonine 85 is modified (phosphothreonine). The Pseudophosphorylation motif signature appears at 96–100 (RRGGV). Arginine 97 is modified (omega-N-methylarginine). 3',5'-cyclic AMP contacts are provided by residues 137–254 (LFAH…SKVS), glutamate 202, arginine 211, 255–381 (ILES…SLTV), glutamate 326, and arginine 335.

The protein belongs to the cAMP-dependent kinase regulatory chain family. The inactive holoenzyme is composed of two regulatory chains and two catalytic chains. Activation by cAMP releases the two active catalytic monomers and the regulatory dimer. Interacts with PRKX; regulates this cAMP-dependent protein kinase. Interacts with C2orf88/smAKAP; this interaction may target PRKAR1B to the plasma membrane. The pseudophosphorylation site binds to the substrate-binding region of the catalytic chain, resulting in the inhibition of its activity. Four types of regulatory chains are found: I-alpha, I-beta, II-alpha, and II-beta. Their expression varies among tissues and is in some cases constitutive and in others inducible.

The protein localises to the cell membrane. Regulatory subunit of the cAMP-dependent protein kinases involved in cAMP signaling in cells. The polypeptide is cAMP-dependent protein kinase type I-beta regulatory subunit (PRKAR1B) (Homo sapiens (Human)).